Here is a 129-residue protein sequence, read N- to C-terminus: GEL complex subunit OPTI (129 aa).

The Cytoplasmic portion of the chain corresponds to 1–44; sequence MSGGRRKEEPPQPQLANGALKVSVWSKVLRSDAAWEDKDEFLDV. The chain crosses the membrane as a helical span at residues 45–65; the sequence is IYWFRQIIAVVLGVIWGVLPL. Position 66 (arginine 66) is a topological domain, lumenal. The chain crosses the membrane as a helical span at residues 67-84; sequence GFLGIAGFCVINAGVLYL. Residues 85–103 lie on the Cytoplasmic side of the membrane; that stretch reads YFSNYLQIDEEEYGGTWEL. Residues 104–127 traverse the membrane as a helical segment; that stretch reads TKEGFMTSFALFMVIWIIFYTAIH. The Lumenal portion of the chain corresponds to 128-129; the sequence is YD.

Belongs to the EMC6 family. In terms of assembly, component of the GET- and EMC-like (GEL) complex, composed of RAB5IF/OPTI and TMCO1. The GEL complex is part of the multi-pass translocon (MPT) complex, composed of three subcomplexes, the GEL complex (composed of RAB5IF/OPTI and TMCO1), the BOS complex (composed of NCLN/Nicalin, NOMO1 and TMEM147) and the PAT complex (composed of WDR83OS/Asterix and CCDC47). The MPT complex associates with the SEC61 complex. Interacts with NDUFS3, NDUFA4, NDUFV1, NDUFA9 and NDUFS8 of the mitochondrial membrane respiratory chain NADH dehydrogenase (Complex I). Interacts with UQCRC2 of the ubiquinol-cytochrome c reductase complex (Complex III). Interacts with COX5A and COX7C of the cytochrome c oxidase complex (Complex IV).

The protein localises to the endoplasmic reticulum membrane. It localises to the mitochondrion inner membrane. Component of the multi-pass translocon (MPT) complex that mediates insertion of multi-pass membrane proteins into the lipid bilayer of membranes. The MPT complex takes over after the SEC61 complex: following membrane insertion of the first few transmembrane segments of proteins by the SEC61 complex, the MPT complex occludes the lateral gate of the SEC61 complex to promote insertion of subsequent transmembrane regions. Within the MPT complex, the GEL subcomplex may mediate insertion of transmembrane regions into the membrane. In addition to its role in multi-pass membrane insertion, RAB5IF/OPTI also acts as an assembly factor for mitochondrial respiratory complexes. The chain is GEL complex subunit OPTI (RAB5IF) from Canis lupus familiaris (Dog).